Consider the following 55-residue polypeptide: uncharacterized protein (55 aa).

This is an uncharacterized protein from Tibrogargan virus (strain CS132) (TIBV).